The chain runs to 254 residues: Phosphoglycerate mutase 1 (254 aa).

Substrate contacts are provided by residues Arg10 to Asn17 and Ser23 to Gly24. Catalysis depends on His11, which acts as the Tele-phosphohistidine intermediate. Residues Ser14 and Ser23 each carry the phosphoserine modification. Residue Tyr26 is modified to Phosphotyrosine. Phosphoserine is present on Ser31. Substrate is bound by residues Arg62, Glu89–Tyr92, and Lys100. Glu89 serves as the catalytic Proton donor/acceptor. Residue Lys106 is modified to N6-acetyllysine. Residue Arg116 to Arg117 coordinates substrate. The residue at position 118 (Ser118) is a Phosphoserine. Substrate is bound at residue Gly187–Asn188. Lys251 bears the N6-acetyllysine; alternate mark. An N6-succinyllysine; alternate modification is found at Lys251. Lys253 and Lys254 each carry N6-acetyllysine.

This sequence belongs to the phosphoglycerate mutase family. BPG-dependent PGAM subfamily. In terms of assembly, homodimer. In terms of processing, acetylated at Lys-253, Lys-253 and Lys-254 under high glucose condition. Acetylation increases catalytic activity. Under glucose restriction SIRT1 levels dramatically increase and it deacetylates the enzyme.

It carries out the reaction (2R)-2-phosphoglycerate = (2R)-3-phosphoglycerate. The enzyme catalyses (2R)-3-phospho-glyceroyl phosphate = (2R)-2,3-bisphosphoglycerate + H(+). Functionally, catalyzes the interconversion of 2-phosphoglycerate and 3-phosphoglyceratea crucial step in glycolysis, by using 2,3-bisphosphoglycerate. Also catalyzes the interconversion of (2R)-2,3-bisphosphoglycerate and (2R)-3-phospho-glyceroyl phosphate. This chain is Phosphoglycerate mutase 1, found in Bos taurus (Bovine).